We begin with the raw amino-acid sequence, 196 residues long: Large ribosomal subunit protein eL15 (196 aa).

The tract at residues 155–196 (THRGRAERGLTSAGKKGRGQRRKGKGTEKNYPSVQAHDRRGK) is disordered. Residues 169–178 (KKGRGQRRKG) show a composition bias toward basic residues.

Belongs to the eukaryotic ribosomal protein eL15 family.

The polypeptide is Large ribosomal subunit protein eL15 (Methanocella arvoryzae (strain DSM 22066 / NBRC 105507 / MRE50)).